The primary structure comprises 455 residues: Keratin, type I cuticular Ha5 (455 aa).

The interval 1 to 97 (MASKCLKASF…FGEGILTGNE (97 aa)) is head. An IF rod domain is found at 97–408 (EKETMQFLND…GLLDSEDCKL (312 aa)). The tract at residues 98 to 132 (KETMQFLNDRLASYLEKVRQLERENAELESRIRDW) is coil 1A. The linker 1 stretch occupies residues 133–143 (CEQQVPYLCPD). The tract at residues 144–244 (YQSYFQTIEE…HEEEVNSLRC (101 aa)) is coil 1B. Residues 245-260 (QLGDRLNVEVDAAPPV) form a linker 12 region. Residues 261–404 (DLNRVLNEMR…STYRGLLDSE (144 aa)) are coil 2. Residues 405 to 455 (DCKLPCNPCAPDHSPSKSCLPCLPAASCGPGTAHTTCSPRPICVSCPGSRF) are tail.

It belongs to the intermediate filament family.

This chain is Keratin, type I cuticular Ha5, found in Ovis aries (Sheep).